The following is a 373-amino-acid chain: Maltose/maltodextrin import ATP-binding protein MalK (373 aa).

An ABC transporter domain is found at 4–234 (VTLKNVCKAY…PQNRFVAGFI (231 aa)). 36 to 43 (GPSGCGKS) lines the ATP pocket.

It belongs to the ABC transporter superfamily. Maltooligosaccharide importer (TC 3.A.1.1.1) family. In terms of assembly, the complex is composed of two ATP-binding proteins (MalK), two transmembrane proteins (MalG and MalK) and a solute-binding protein (MalE).

The protein resides in the cell inner membrane. The enzyme catalyses D-maltose(out) + ATP + H2O = D-maltose(in) + ADP + phosphate + H(+). Its function is as follows. Part of the ABC transporter complex MalEFGK involved in maltose/maltodextrin import. Responsible for energy coupling to the transport system. This chain is Maltose/maltodextrin import ATP-binding protein MalK, found in Vibrio cholerae serotype O1 (strain ATCC 39315 / El Tor Inaba N16961).